The following is a 141-amino-acid chain: Endoribonuclease YbeY (141 aa).

Zn(2+)-binding residues include H107, H111, and D117.

Belongs to the endoribonuclease YbeY family. The cofactor is Zn(2+).

Its subcellular location is the cytoplasm. In terms of biological role, single strand-specific metallo-endoribonuclease involved in late-stage 70S ribosome quality control and in maturation of the 3' terminus of the 16S rRNA. This chain is Endoribonuclease YbeY, found in Endomicrobium trichonymphae.